The primary structure comprises 211 residues: Large ribosomal subunit protein bL9 (211 aa).

Positions 183–211 are disordered; sequence AAASEDEELAETAGVAPAEPSEEDDSAKA. Residues 202–211 show a composition bias toward acidic residues; that stretch reads PSEEDDSAKA.

This sequence belongs to the bacterial ribosomal protein bL9 family.

Binds to the 23S rRNA. In Roseobacter denitrificans (strain ATCC 33942 / OCh 114) (Erythrobacter sp. (strain OCh 114)), this protein is Large ribosomal subunit protein bL9.